Reading from the N-terminus, the 148-residue chain is FAD synthase (148 aa).

Residues 14–15 (VF), 19–22 (HVGH), and Asp-100 each bind ATP.

Belongs to the archaeal FAD synthase family. In terms of assembly, homodimer. The cofactor is a divalent metal cation.

The catalysed reaction is FMN + ATP + H(+) = FAD + diphosphate. The protein operates within cofactor biosynthesis; FAD biosynthesis; FAD from FMN: step 1/1. Functionally, catalyzes the transfer of the AMP portion of ATP to flavin mononucleotide (FMN) to produce flavin adenine dinucleotide (FAD) coenzyme. In Thermococcus sibiricus (strain DSM 12597 / MM 739), this protein is FAD synthase.